A 248-amino-acid polypeptide reads, in one-letter code: Triosephosphate isomerase (248 aa).

9-11 contacts substrate; the sequence is NWK. The Electrophile role is filled by histidine 94. The Proton acceptor role is filled by glutamate 166. Substrate is bound by residues glycine 172, serine 212, and 233–234; that span reads GG.

The protein belongs to the triosephosphate isomerase family. In terms of assembly, homodimer.

Its subcellular location is the cytoplasm. It carries out the reaction D-glyceraldehyde 3-phosphate = dihydroxyacetone phosphate. The protein operates within carbohydrate biosynthesis; gluconeogenesis. It functions in the pathway carbohydrate degradation; glycolysis; D-glyceraldehyde 3-phosphate from glycerone phosphate: step 1/1. Its function is as follows. Involved in the gluconeogenesis. Catalyzes stereospecifically the conversion of dihydroxyacetone phosphate (DHAP) to D-glyceraldehyde-3-phosphate (G3P). The protein is Triosephosphate isomerase of Alkaliphilus metalliredigens (strain QYMF).